We begin with the raw amino-acid sequence, 309 residues long: Fe-S cluster assembly protein dre2 (309 aa).

Residues 1 to 132 form an N-terminal SAM-like domain region; that stretch reads MTTTIVLASP…LRRPAQVEAV (132 aa). The linker stretch occupies residues 133-195; that stretch reads PLKLSTKKSA…DALVSDEETQ (63 aa). [2Fe-2S] cluster contacts are provided by Cys-207, Cys-216, Cys-219, and Cys-221. The fe-S binding site A stretch occupies residues 207–221; the sequence is CSKPGKKKRCKNCTC. Cys-265, Cys-268, Cys-276, and Cys-279 together coordinate [4Fe-4S] cluster. 2 short sequence motifs (cx2C motif) span residues 265-268 and 276-279; these read CGSC and CSGC. Residues 265–279 are fe-S binding site B; the sequence is CGSCYLGDAFRCSGC.

The protein belongs to the anamorsin family. As to quaternary structure, monomer. Interacts with TAH18. Interacts with MIA40. [2Fe-2S] cluster is required as a cofactor. The cofactor is [4Fe-4S] cluster.

The protein resides in the cytoplasm. Its subcellular location is the mitochondrion intermembrane space. Component of the cytosolic iron-sulfur (Fe-S) protein assembly (CIA) machinery required for the maturation of extramitochondrial Fe-S proteins. Part of an electron transfer chain functioning in an early step of cytosolic Fe-S biogenesis, facilitating the de novo assembly of a [4Fe-4S] cluster on the scaffold complex CFD1-NBP35. Electrons are transferred to DRE2 from NADPH via the FAD- and FMN-containing protein TAH18. TAH18-DRE2 are also required for the assembly of the diferric tyrosyl radical cofactor of ribonucleotide reductase (RNR), probably by providing electrons for reduction during radical cofactor maturation in the catalytic small subunit RNR2. This is Fe-S cluster assembly protein dre2 from Schizosaccharomyces japonicus (strain yFS275 / FY16936) (Fission yeast).